The chain runs to 532 residues: Intercellular adhesion molecule 1 (532 aa).

The first 27 residues, 1–27 (MAPSSPRPALPALLVLLGALFPGPGNA), serve as a signal peptide directing secretion. The Extracellular portion of the chain corresponds to 28-480 (QTSVSPPKVI…TVNVLSPRYE (453 aa)). Ig-like C2-type domains are found at residues 41–103 (GGSV…QSTA) and 128–193 (GKDL…LDLR). 3 cysteine pairs are disulfide-bonded: Cys48-Cys92, Cys52-Cys96, and Cys135-Cys186. An N-linked (GlcNAc...) asparagine glycan is attached at Asn145. The short motif at 152–154 (RGE) is the Cell attachment site; atypical element. N-linked (GlcNAc...) asparagine glycosylation is found at Asn183, Asn202, Asn267, and Asn296. Ig-like C2-type domains follow at residues 230 to 297 (DTQG…LGNQ) and 325 to 378 (GTEV…LEVA). Cysteines 237 and 290 form a disulfide. The cysteines at positions 332 and 371 are disulfide-linked. Asn385 and Asn406 each carry an N-linked (GlcNAc...) asparagine glycan. Intrachain disulfides connect Cys403/Cys419, Cys419/Cys457, and Cys431/Cys457. In terms of domain architecture, Ig-like C2-type 5 spans 412–464 (NSQQTPMCQASGNPLPELKCLKDGTFPLPVGESVTVTRDLEGTYLCRARSTQG). The helical transmembrane segment at 481-503 (IVIITVVAAAVIMGTAGLSTYLY) threads the bilayer. Residues 504 to 532 (NRQRKIRKYRLQQAQKGTPMKPNTQATPP) are Cytoplasmic-facing. Residues Thr521 and Thr530 each carry the phosphothreonine modification.

Belongs to the immunoglobulin superfamily. ICAM family. In terms of assembly, homodimer. Interacts with MUC1 and promotes cell aggregation in epithelial cells. Interacts with ARHGEF26/SGEF. Interacts (on T cell side) with CD81, CD247 and CD9 at immunological synapses between antigen-presenting cells and T cells. Post-translationally, monoubiquitinated, which is promoted by MARCH9 and leads to endocytosis.

It is found in the membrane. In terms of biological role, ICAM proteins are ligands for the leukocyte adhesion protein LFA-1 (integrin alpha-L/beta-2). During leukocyte trans-endothelial migration, ICAM1 engagement promotes the assembly of endothelial apical cups through ARHGEF26/SGEF and RHOG activation. The chain is Intercellular adhesion molecule 1 (ICAM1) from Pan paniscus (Pygmy chimpanzee).